Consider the following 81-residue polypeptide: RNA-binding protein Hfq (81 aa).

In terms of domain architecture, Sm spans 10–69; it reads DPFLNTLRKEHIPVSIYLVNGIKLQGHIDSFDQYVVLLKNTVTQMVYKHAISTVVPARAV.

The protein belongs to the Hfq family. Homohexamer.

In terms of biological role, RNA chaperone that binds small regulatory RNA (sRNAs) and mRNAs to facilitate mRNA translational regulation in response to envelope stress, environmental stress and changes in metabolite concentrations. Also binds with high specificity to tRNAs. In Nitrosospira multiformis (strain ATCC 25196 / NCIMB 11849 / C 71), this protein is RNA-binding protein Hfq.